The primary structure comprises 166 residues: Large ribosomal subunit protein uL11z (166 aa).

Belongs to the universal ribosomal protein uL11 family.

Binds directly to 26S ribosomal RNA. The protein is Large ribosomal subunit protein uL11z (RPL12A) of Arabidopsis thaliana (Mouse-ear cress).